The primary structure comprises 265 residues: Pre-mRNA-splicing factor cwf15 (265 aa).

Disordered stretches follow at residues 1 to 31 (MTTAHRPQFDPARGHSEMAPTRITSSRALPA) and 62 to 197 (AAHF…ALEQ). Residues 113–125 (EADEDASDSDDSV) are compositionally biased toward acidic residues. Residues 143–155 (SNSQESVDSSNSE) show a composition bias toward low complexity. Residues 155–205 (ESSDEESDSEDETQQLLRELENIKQERKREQMLQEEKNRALEQEKREREIA) adopt a coiled-coil conformation. Over residues 156-167 (SSDEESDSEDET) the composition is skewed to acidic residues. Residues 172–197 (RELENIKQERKREQMLQEEKNRALEQ) are compositionally biased toward basic and acidic residues.

Belongs to the CWC15 family. Belongs to the 40S cdc5-associated complex (or cwf complex), a spliceosome sub-complex reminiscent of a late-stage spliceosome composed of the U2, U5 and U6 snRNAs and at least brr2, cdc5, cwf2/prp3, cwf3/syf1, cwf4/syf3, cwf5/ecm2, spp42/cwf6, cwf7/spf27, cwf8, cwf9, cwf10, cwf11, cwf12, prp45/cwf13, cwf14, cwf15, cwf16, cwf17, cwf18, cwf19, cwf20, cwf21, cwf22, cwf23, cwf24, cwf25, cwf26, cyp7/cwf27, cwf28, cwf29/ist3, lea1, msl1, prp5/cwf1, prp10, prp12/sap130, prp17, prp22, sap61, sap62, sap114, sap145, slu7, smb1, smd1, smd3, smf1, smg1 and syf2.

It is found in the nucleus. In terms of biological role, involved in pre-mRNA splicing. This is Pre-mRNA-splicing factor cwf15 (cwf15) from Schizosaccharomyces pombe (strain 972 / ATCC 24843) (Fission yeast).